The primary structure comprises 258 residues: Cytochrome P450 1A2 (258 aa).

The protein belongs to the cytochrome P450 family. Heme is required as a cofactor.

It is found in the endoplasmic reticulum membrane. It localises to the microsome membrane. It carries out the reaction an organic molecule + reduced [NADPH--hemoprotein reductase] + O2 = an alcohol + oxidized [NADPH--hemoprotein reductase] + H2O + H(+). Cytochromes P450 are a group of heme-thiolate monooxygenases. In liver microsomes, this enzyme is involved in an NADPH-dependent electron transport pathway. It oxidizes a variety of structurally unrelated compounds, including steroids, fatty acids, and xenobiotics. This chain is Cytochrome P450 1A2 (CYP1A2), found in Gallus gallus (Chicken).